Here is a 312-residue protein sequence, read N- to C-terminus: Plasminogen activator (312 aa).

Residues 1-20 (MKKSSIVATIITILSGSANA) form the signal peptide. The Periplasmic segment spans residues 21–31 (ASSQLIPNISP). A beta stranded transmembrane segment spans residues 32–40 (DSFTVAAST). The Extracellular portion of the chain corresponds to 41 to 70 (GMLSGKSHEMLYDAETGRKISQLDWKIKNV). The beta stranded transmembrane segment at 71-80 (AILKGDISWD) threads the bilayer. Residues 81-84 (PYSF) are Periplasmic-facing. A beta stranded membrane pass occupies residues 85–94 (LTLNARGWTS). Over 95 to 131 (LASGSGNMDDYDWMNENQSEWTDHSSHPATNVNHANE) the chain is Extracellular. Active-site residues include Asp104 and Asp106. A beta stranded transmembrane segment spans residues 132–140 (YDLNVKGWL). The Periplasmic segment spans residues 141–145 (LQDEN). The chain crosses the membrane as a beta stranded span at residues 146-154 (YKAGITAGY). Residues 155–194 (QETRFSWTATGGSYSYNNGAYTGNFPKGVRVIGYNQRFSM) are Extracellular-facing. A beta stranded transmembrane segment spans residues 195-204 (PYIGLAGQYR). The Periplasmic portion of the chain corresponds to 205-207 (IND). A beta stranded membrane pass occupies residues 208–216 (FELNALFKF). Residues 217–244 (SDWVRAHDNDEHYMRDLTFREKTSGSRY) are Extracellular-facing. Catalysis depends on residues Asp226 and His228. The chain crosses the membrane as a beta stranded span at residues 245–255 (YGTVINAGYYV). The Periplasmic portion of the chain corresponds to 256 to 258 (TPN). Residues 259 to 267 (AKVFAEFTY) form a beta stranded membrane-spanning segment. Over 268 to 301 (SKYDEGKGGTQTIDKNSGDSVSIGGDAAGISNKN) the chain is Extracellular. A beta stranded transmembrane segment spans residues 302-312 (YTVTAGLQYRF).

The protein belongs to the peptidase A26 family.

The protein localises to the cell outer membrane. It catalyses the reaction Converts human Glu-plasminogen to plasmin by cleaving the 560-Arg-|-Val-561 peptide bond that is also hydrolyzed by the mammalian u-plasminogen activator and t-plasminogen activator. Also cleaves arginyl bonds in other proteins.. Its activity is regulated as follows. Requires bacterial lipopolysaccharide (LPS) for activation; addition of LPS to inactive protein reactivates it. In the absence of LPS the active site groove is slightly narrower, and peptide substrate binds deep within the active site groove, displacing the nucleophilic water molecule. Functionally, in the mammalian host activates (cleaves) plasminogen to generate the serine protease plasmin. Plasmin degrades fibrin clots (fibrinolysis) and facilitates bacterial cell migration, enabling rapid dissemination of bacteria from the initial site of infection. Cleaves host plasminogen to generate plasmin and probably also has autocatalytic activity. Fibrinolytic activity prevails at 37 degrees Celsius whereas coagulase expression predominates at lower temperatures (28 degrees Celsius). Cleaves plasminogen; plasminogen cleavage is much higher than coagulase activity. This Yersinia pestis protein is Plasminogen activator.